We begin with the raw amino-acid sequence, 329 residues long: Tyrosine--tRNA ligase (329 aa).

The L-tyrosine site is built by Tyr-31, Tyr-157, Gln-161, Asp-164, and Gln-179. The short motif at 220–224 (KMSKS) is the 'KMSKS' region element. Residue Lys-223 coordinates ATP.

It belongs to the class-I aminoacyl-tRNA synthetase family. TyrS type 4 subfamily. In terms of assembly, homodimer.

It is found in the cytoplasm. It catalyses the reaction tRNA(Tyr) + L-tyrosine + ATP = L-tyrosyl-tRNA(Tyr) + AMP + diphosphate + H(+). Catalyzes the attachment of tyrosine to tRNA(Tyr) in a two-step reaction: tyrosine is first activated by ATP to form Tyr-AMP and then transferred to the acceptor end of tRNA(Tyr). This chain is Tyrosine--tRNA ligase, found in Picrophilus torridus (strain ATCC 700027 / DSM 9790 / JCM 10055 / NBRC 100828 / KAW 2/3).